We begin with the raw amino-acid sequence, 950 residues long: Protocadherin alpha-9 (950 aa).

A signal peptide spans 1 to 29 (MLYSSRGDPEGQPLLLSLLILAMWVVGSG). Cadherin domains are found at residues 30-133 (QLHY…PPVF), 134-242 (PATQ…APVF), 243-350 (DRTL…APQL), 351-455 (TIKT…APAF), 456-565 (AQPE…APAL), and 588-678 (GVVV…APKS). The Extracellular segment spans residues 30 to 697 (QLHYSVPEEA…GPEVTLVDVN (668 aa)). 2 N-linked (GlcNAc...) asparagine glycosylation sites follow: asparagine 254 and asparagine 265. Residue asparagine 548 is glycosylated (N-linked (GlcNAc...) asparagine). The helical transmembrane segment at 698–718 (VYLIIAICAVSSLLVLTLLLY) threads the bilayer. Residues 719-950 (TVLRCSAMPT…GNSTTDNSDQ (232 aa)) lie on the Cytoplasmic side of the membrane. One copy of the PXXP 1 repeat lies at 734–737 (PGKP). Residues 734 to 894 (PGKPTLVCSS…PDKFIIPGSP (161 aa)) form a 5 X 4 AA repeats of P-X-X-P region. Disordered stretches follow at residues 759 to 808 (CSGE…DWRY) and 827 to 950 (ILRA…NSDQ). Residues 789–798 (PSASSDSSGK) are compositionally biased toward polar residues. 4 PXXP repeats span residues 799-802 (PRQP), 832-835 (PGGP), 873-876 (PGNP), and 891-894 (PGSP). Residues 909–923 (DKSDFITFGKKEETK) show a composition bias toward basic and acidic residues.

Its subcellular location is the cell membrane. Potential calcium-dependent cell-adhesion protein. May be involved in the establishment and maintenance of specific neuronal connections in the brain. This is Protocadherin alpha-9 (PCDHA9) from Pan troglodytes (Chimpanzee).